The primary structure comprises 412 residues: MQQLIDNLKKRGILDNSSAGLESLTVPVSAYLGFDPTAPSLHIGHWIGICFLRRLAAYGITPVALVGGATGMIGDPSGKSVERSLLDQAQVLDNSKKIAAALASYLPGIRIVNNADWLGSLSMVDFLRDVGKHFRLGSMLAKDVVKQRVYSEEGISYTEFSYLLLQSYDFAHLFKEHNVVLQCGGSDQWGNITSGIDYIRRRGLGQAYGLTYPLLTDSKGKKIGKTESGTIWLDPALTPPYELFQYFLRLPDQEISKVMRTLTLLDNEEIFALDERLTSDPQAVKKYIAEVIVKDVHGSEGLAQAQAATESFFASKGKSITEAELVALVESGVGVKVARADLIGKRWLDIVVELGFCSSRGQARRLIQQRGLYINQEPLADEQSILDGTQLCFDRYVLLSQGKRKKQVIDLN.

An L-tyrosine-binding site is contributed by Y31. The 'HIGH' region signature appears at 36–45; it reads PTAPSLHIGH. Residues Y162 and Q166 each coordinate L-tyrosine. A 'KMSKS' region motif is present at residues 222 to 226; the sequence is KIGKT. Residue K225 participates in ATP binding. The region spanning 345–411 is the S4 RNA-binding domain; the sequence is KRWLDIVVEL…GKRKKQVIDL (67 aa).

It belongs to the class-I aminoacyl-tRNA synthetase family. TyrS type 1 subfamily. As to quaternary structure, homodimer.

The protein localises to the cytoplasm. The catalysed reaction is tRNA(Tyr) + L-tyrosine + ATP = L-tyrosyl-tRNA(Tyr) + AMP + diphosphate + H(+). In terms of biological role, catalyzes the attachment of tyrosine to tRNA(Tyr) in a two-step reaction: tyrosine is first activated by ATP to form Tyr-AMP and then transferred to the acceptor end of tRNA(Tyr). This Chlamydia trachomatis serovar L2 (strain ATCC VR-902B / DSM 19102 / 434/Bu) protein is Tyrosine--tRNA ligase.